The following is a 1011-amino-acid chain: MVAAHAAHSQSSAEWIACLDKRPLERSSEDVDIIFTRLKGVKAFEKFHPNLLRQICLCGYYENLEKGITLFRQGDIGTNWYAVLAGSLDVKVSETSSHQDAVTICTLGIGTAFGESILDNTPRHATIVTRESSELLRIEQEDFKALWEKYRQYMAGLLAPPYGVMETGSNNDRIPDKENTPLIEPHVPLRPAHTITKVPSEKILRAGKILRIAILSRAPHMIRDRKYHLKTYRQCCVGTELVDWMIQQTSCVHSRTQAVGMWQVLLEDGVLNHVDQERHFQDKYLFYRFLDDEREDAPLPTEEEKKECDEELQDTMLLLSQMGPDAHMRMILRKPPGQRTVDDLEIIYDELLHIKALSHLSTTVKRELAGVLIFESHAKGGTVLFNQGEEGTSWYIILKGSVNVVIYGKGVVCTLHEGDDFGKLALVNDAPRAASIVLREDNCHFLRVDKEDFNRILRDVEANTVRLKEHDQDVLVLEKVPAGNRAANQGNSQPQQKYTVMSGTPEKILEHFLETIRLEPSLNEATDSVLNDFVMMHCVFMPNTQLCPALVAHYHAQPSQGTEQERMDYALNNKRRVIRLVLQWAAMYGDLLQEDDVAMAFLEEFYVSVSDDARMMAAFKEQLPELEKIVKQISEDAKAPQKKHKVLLQQFNTGDERAQKRQPIRGSDEVLFKVYCIDHTYTTIRVPVAASVKEVISAVADKLGSGEGLIIVKMNSGGEKVVLKSNDVSVFTTLTINGRLFACPREQFDSLTPLPEQEGPTTGTVGTFELMSSKDLAYQMTTYDWELFNCVHELELIYHTFGRHNFKKTTANLDLFLRRFNEIQFWVVTEVCLCSQLSKRVQLLKKFIKIAAHCKEYKNLNSFFAIVMGLSNVAVSRLALTWEKLPSKFKKFYAEFESLMDPSRNHRAYRLTAAKLEPPLIPFMPLLIKDMTFTHEGNKTFIDNLVNFEKMRMIANTARTVRYYRSQPFNPDAAQANKNHQDVRSYVRQLNVIDNQRTLSQMSHRLEPRRP.

One can recognise a DEP domain in the interval 216 to 291 (SRAPHMIRDR…DKYLFYRFLD (76 aa)). 3',5'-cyclic AMP contacts are provided by residues 422 to 425 (GKLA) and 432 to 433 (RA). One can recognise an N-terminal Ras-GEF domain in the interval 496 to 634 (QKYTVMSGTP…ELEKIVKQIS (139 aa)). Residues 772 to 1009 (SSKDLAYQMT…SQMSHRLEPR (238 aa)) enclose the Ras-GEF domain.

As to quaternary structure, interacts with RAP1B, RIMS1 and RIMS2. Probably part of a complex with RIMS2 and GTP-activated RAB3A. As to expression, expressed in cerebellum, pituitary, adrenal gland and liver.

It is found in the cytoplasm. The protein localises to the membrane. In terms of biological role, guanine nucleotide exchange factor (GEF) for RAP1A, RAP1B and RAP2A small GTPases that is activated by binding cAMP. Seems not to activate RAB3A. Involved in cAMP-dependent, PKA-independent exocytosis through interaction with RIMS2. The chain is Rap guanine nucleotide exchange factor 4 (Rapgef4) from Mus musculus (Mouse).